The primary structure comprises 419 residues: Tyrosine--tRNA ligase (419 aa).

L-tyrosine is bound at residue Tyr34. A 'HIGH' region motif is present at residues 39–48; it reads PSGDSMHIGH. Residues Tyr168 and Gln172 each contribute to the L-tyrosine site. The 'KMSKS' region signature appears at 230–234; sequence KFGKS. Lys233 contributes to the ATP binding site. An S4 RNA-binding domain is found at 352-418; that stretch reads ANLVDWLVTL…GKKKYFLVSY (67 aa).

The protein belongs to the class-I aminoacyl-tRNA synthetase family. TyrS type 1 subfamily. Homodimer.

It is found in the cytoplasm. It catalyses the reaction tRNA(Tyr) + L-tyrosine + ATP = L-tyrosyl-tRNA(Tyr) + AMP + diphosphate + H(+). Its function is as follows. Catalyzes the attachment of tyrosine to tRNA(Tyr) in a two-step reaction: tyrosine is first activated by ATP to form Tyr-AMP and then transferred to the acceptor end of tRNA(Tyr). This chain is Tyrosine--tRNA ligase, found in Listeria monocytogenes serovar 1/2a (strain ATCC BAA-679 / EGD-e).